Here is a 762-residue protein sequence, read N- to C-terminus: Polyadenylate-binding protein, cytoplasmic and nuclear (762 aa).

A disordered region spans residues 39 to 58 (TGEEIDTAGPTPSSAAPHPQ). Residues 48 to 58 (PTPSSAAPHPQ) are compositionally biased toward low complexity. 4 consecutive RRM domains span residues 61-139 (ASLY…WSQR), 149-226 (GNVF…HHIP), 242-320 (TNIY…RAQK), and 346-470 (VNLY…LAQR). Disordered regions lie at residues 376 to 429 (KVMR…KSKL), 596 to 663 (SALA…AGAP), and 740 to 762 (VRQQ…EEKA). Residues 389–425 (GESKEGEESEKNKENKPEEKEGDDSKPEEKEGEDSKS) show a composition bias toward basic and acidic residues. Residues 600–612 (GGRGGPAGRGPMQ) show a composition bias toward gly residues. Residues 645–663 (AAGRAPAGAPAGARGAGAP) are compositionally biased toward low complexity. Residues 664–741 (EGLQGQLAAV…ALAVYDDYVR (78 aa)) enclose the PABC domain. A compositionally biased stretch (basic and acidic residues) spans 753–762 (SKEEKTEEKA).

It belongs to the polyadenylate-binding protein type-1 family.

The protein resides in the cytoplasm. The protein localises to the nucleus. In terms of biological role, binds the poly(A) tail of mRNA. Appears to be an important mediator of the multiple roles of the poly(A) tail in mRNA biogenesis, stability and translation. In the nucleus, involved in both mRNA cleavage and polyadenylation. Is also required for efficient mRNA export to the cytoplasm. Acts in concert with a poly(A)-specific nuclease (PAN) to affect poly(A) tail shortening, which may occur concomitantly with either nucleocytoplasmic mRNA transport or translational initiation. In the cytoplasm, stimulates translation initiation and regulates mRNA decay through translation termination-coupled poly(A) shortening, probably mediated by PAN. The chain is Polyadenylate-binding protein, cytoplasmic and nuclear (PAB1) from Pyricularia oryzae (strain 70-15 / ATCC MYA-4617 / FGSC 8958) (Rice blast fungus).